The primary structure comprises 301 residues: Nucleotide-binding protein MAB_2783c (301 aa).

24–31 provides a ligand contact to ATP; sequence GLSGAGRG. 75–78 contacts GTP; the sequence is DVRS.

This sequence belongs to the RapZ-like family.

In terms of biological role, displays ATPase and GTPase activities. This Mycobacteroides abscessus (strain ATCC 19977 / DSM 44196 / CCUG 20993 / CIP 104536 / JCM 13569 / NCTC 13031 / TMC 1543 / L948) (Mycobacterium abscessus) protein is Nucleotide-binding protein MAB_2783c.